We begin with the raw amino-acid sequence, 439 residues long: NAD-dependent malic enzyme 1 (439 aa).

The region spanning 9 to 84 is the ACT domain; sequence TLMIETPSVP…GIRLHTVSDE (76 aa). The active-site Proton donor is Tyr-112. Lys-167 serves as the catalytic Proton acceptor. A divalent metal cation-binding residues include Glu-209, Asp-210, and Asp-235. NAD(+)-binding positions include 268 to 271, Asn-347, and Asn-373; that span reads LGAA.

This sequence belongs to the malic enzymes family. Mg(2+) serves as cofactor. The cofactor is Mn(2+).

The catalysed reaction is (S)-malate + NAD(+) = pyruvate + CO2 + NADH. It catalyses the reaction oxaloacetate + H(+) = pyruvate + CO2. In terms of biological role, catalyzes the decarboxylation of malate to pyruvate. Is specific for NAD, cannot use NADP. Can also catalyze the decarboxylation of oxaloacetate. Involved in keeping the ATP levels high. The polypeptide is NAD-dependent malic enzyme 1 (Bacillus subtilis (strain 168)).